The following is a 347-amino-acid chain: Endophilin-A3 (347 aa).

Positions 1–21 (MSVAGLKKQFHKASQLFSEKI) are membrane-binding amphipathic helix. One can recognise a BAR domain in the interval 18–249 (SEKISGAEGT…LQMRISAASS (232 aa)). A required for dimerization upon membrane association region spans residues 60 to 87 (PNPAYRAKLGMLNTVSKIRGQVKTTGYP). A coiled-coil region spans residues 181 to 201 (EEVRQAVEKFEESKELAERSM). The segment at 218–254 (FIEAALDYHRQSTEILQELQSKLQMRISAASSVPRRE) is interaction with ARC. The disordered stretch occupies residues 248–271 (SSVPRREYKPRPVKRSSSELNGVS). Serine 265 bears the Phosphoserine mark. One can recognise an SH3 domain in the interval 285–344 (MDQPCCRGLYDFEPENQGELGFKEGDIITLTNQIDENWYEGMIHGESGFFPINYVEVIVP).

This sequence belongs to the endophilin family. In terms of assembly, interacts with ARC. Interacts with DNM1, SGIP1 and SYNJ1. Interacts with the huntingtin exon 1 protein (HDEX1P) containing a glutamine repeat in the pathological range and promotes formation of insoluble polyglutamine-containing aggregates in vivo. Interacts with DYDC1. Interacts with FASLG. Interacts with ATXN2. Interacts with BIN2. Brain and testis.

The protein resides in the cytoplasm. The protein localises to the early endosome membrane. Functionally, implicated in endocytosis. May recruit other proteins to membranes with high curvature. The protein is Endophilin-A3 (SH3GL3) of Homo sapiens (Human).